The chain runs to 70 residues: MKPGIHPEYAEITANCTCGNVIKVNSTVGKDLHLDVCGACHPFYTGTQKVVDTGGRIDKFNKRFGMLGKK.

Cys-16, Cys-18, Cys-37, and Cys-40 together coordinate Zn(2+).

This sequence belongs to the bacterial ribosomal protein bL31 family. Type A subfamily. Part of the 50S ribosomal subunit. It depends on Zn(2+) as a cofactor.

Binds the 23S rRNA. In Shewanella oneidensis (strain ATCC 700550 / JCM 31522 / CIP 106686 / LMG 19005 / NCIMB 14063 / MR-1), this protein is Large ribosomal subunit protein bL31.